The sequence spans 363 residues: Chorismate synthase (363 aa).

NADP(+) contacts are provided by arginine 48 and arginine 54. FMN-binding positions include 125–127 (RSS), 237–238 (NA), glycine 277, 292–296 (KPTSS), and arginine 318.

It belongs to the chorismate synthase family. In terms of assembly, homotetramer. Requires FMNH2 as cofactor.

The enzyme catalyses 5-O-(1-carboxyvinyl)-3-phosphoshikimate = chorismate + phosphate. The protein operates within metabolic intermediate biosynthesis; chorismate biosynthesis; chorismate from D-erythrose 4-phosphate and phosphoenolpyruvate: step 7/7. Its function is as follows. Catalyzes the anti-1,4-elimination of the C-3 phosphate and the C-6 proR hydrogen from 5-enolpyruvylshikimate-3-phosphate (EPSP) to yield chorismate, which is the branch point compound that serves as the starting substrate for the three terminal pathways of aromatic amino acid biosynthesis. This reaction introduces a second double bond into the aromatic ring system. In Pseudomonas savastanoi pv. phaseolicola (strain 1448A / Race 6) (Pseudomonas syringae pv. phaseolicola (strain 1448A / Race 6)), this protein is Chorismate synthase.